Here is a 943-residue protein sequence, read N- to C-terminus: 2-oxoglutarate dehydrogenase E1 component (943 aa).

The protein belongs to the alpha-ketoglutarate dehydrogenase family. Homodimer. Part of the 2-oxoglutarate dehydrogenase (OGDH) complex composed of E1 (2-oxoglutarate dehydrogenase), E2 (dihydrolipoamide succinyltransferase) and E3 (dihydrolipoamide dehydrogenase); the complex contains multiple copies of the three enzymatic components (E1, E2 and E3). The cofactor is thiamine diphosphate.

It carries out the reaction N(6)-[(R)-lipoyl]-L-lysyl-[protein] + 2-oxoglutarate + H(+) = N(6)-[(R)-S(8)-succinyldihydrolipoyl]-L-lysyl-[protein] + CO2. E1 component of the 2-oxoglutarate dehydrogenase (OGDH) complex which catalyzes the decarboxylation of 2-oxoglutarate, the first step in the conversion of 2-oxoglutarate to succinyl-CoA and CO(2). In Azotobacter vinelandii, this protein is 2-oxoglutarate dehydrogenase E1 component (sucA).